A 189-amino-acid chain; its full sequence is Protein GrpE (189 aa).

A disordered region spans residues Met1–Glu37. Residues Ser17–Asp33 are compositionally biased toward basic and acidic residues.

The protein belongs to the GrpE family. Homodimer.

Its subcellular location is the cytoplasm. In terms of biological role, participates actively in the response to hyperosmotic and heat shock by preventing the aggregation of stress-denatured proteins, in association with DnaK and GrpE. It is the nucleotide exchange factor for DnaK and may function as a thermosensor. Unfolded proteins bind initially to DnaJ; upon interaction with the DnaJ-bound protein, DnaK hydrolyzes its bound ATP, resulting in the formation of a stable complex. GrpE releases ADP from DnaK; ATP binding to DnaK triggers the release of the substrate protein, thus completing the reaction cycle. Several rounds of ATP-dependent interactions between DnaJ, DnaK and GrpE are required for fully efficient folding. The polypeptide is Protein GrpE (Wolbachia sp. subsp. Drosophila simulans (strain wRi)).